The chain runs to 205 residues: Probable thymidylate kinase (205 aa).

Position 10-17 (10-17) interacts with ATP; sequence GIDGSGKT.

Belongs to the thymidylate kinase family.

It carries out the reaction dTMP + ATP = dTDP + ADP. This chain is Probable thymidylate kinase (tmk), found in Pyrococcus abyssi (strain GE5 / Orsay).